The primary structure comprises 90 residues: Acyl-CoA-binding protein (90 aa).

Basic and acidic residues predominate over residues 1 to 16 (MGLKEDFEEHAEKAKT). Positions 1–20 (MGLKEDFEEHAEKAKTLPEN) are disordered. The ACB domain occupies 3–88 (LKEDFEEHAE…VKQLLGEAAA (86 aa)). Residues 30–34 (YGLYK), lysine 56, and tyrosine 75 each bind an acyl-CoA.

This sequence belongs to the ACBP family.

Its function is as follows. Binds medium- and long-chain acyl-CoA esters with very high affinity and may function as an intracellular carrier of acyl-CoA esters. The polypeptide is Acyl-CoA-binding protein (Ricinus communis (Castor bean)).